The primary structure comprises 750 residues: Cullin-5 (750 aa).

The Cullin neddylation domain maps to 678-739 (RFFKLQAAIV…QEYIRRTTDD (62 aa)). Lys691 participates in a covalent cross-link: Glycyl lysine isopeptide (Lys-Gly) (interchain with G-Cter in NEDD8).

This sequence belongs to the cullin family. Post-translationally, neddylated; which enhances the ubiquitination activity of SCF-like complex.

Its pathway is protein modification; protein ubiquitination. Functionally, probable core component of cullin-based SCF-like E3 ubiquitin-protein ligase complexes which mediate the ubiquitination and subsequent proteasomal degradation of target proteins. The E3 ubiquitin-protein ligase activity of the complex is dependent on the neddylation of the cullin subunit. This Dictyostelium discoideum (Social amoeba) protein is Cullin-5 (culE).